We begin with the raw amino-acid sequence, 333 residues long: Anthranilate phosphoribosyltransferase (333 aa).

Residues G81, 84 to 85, T89, 91 to 94, 109 to 117, and A121 each bind 5-phospho-alpha-D-ribose 1-diphosphate; these read GD, NIST, and KHGNRSVSS. G81 contacts anthranilate. S93 is a Mg(2+) binding site. N112 is a binding site for anthranilate. An anthranilate-binding site is contributed by R167. Residues D225 and E226 each coordinate Mg(2+).

Belongs to the anthranilate phosphoribosyltransferase family. In terms of assembly, homodimer. The cofactor is Mg(2+).

It carries out the reaction N-(5-phospho-beta-D-ribosyl)anthranilate + diphosphate = 5-phospho-alpha-D-ribose 1-diphosphate + anthranilate. Its pathway is amino-acid biosynthesis; L-tryptophan biosynthesis; L-tryptophan from chorismate: step 2/5. In terms of biological role, catalyzes the transfer of the phosphoribosyl group of 5-phosphorylribose-1-pyrophosphate (PRPP) to anthranilate to yield N-(5'-phosphoribosyl)-anthranilate (PRA). This chain is Anthranilate phosphoribosyltransferase, found in Haemophilus influenzae (strain PittEE).